The following is a 436-amino-acid chain: EPS I polysaccharide export inner membrane protein EpsE (436 aa).

Helical transmembrane passes span 20-40, 49-69, 91-111, 133-153, 160-180, 185-205, 234-254, 261-281, 307-327, 341-361, 375-395, and 396-416; these read VLGLGAAVASRGAVFVSNILL, FGLFSYAYVTALNLGLFLATG, LCAFIVLLMALIAVAAAALYL, AAIVLIATAFTQALQSFQYAM, ATISIGAAVLLLTMLWAMGPI, LALTIFLAVNAGAAVSQLLVL, VLTTSMGAPVHWICLSMLAAM, LALFSVAFQWYIAITFIPATL, ALLFGGGLSLALGCASFLLAG, AASSMRSLSVAAALCGVSVLL, FAMAAVYSVIYVAASYLALRL, and GFGATSIGLAMSAAYCCLILF.

This sequence to E.coli bicyclomycin resistance protein (BCR).

The protein localises to the cell inner membrane. Its function is as follows. Probably involved in polymerization and/or export of exopolysaccharide EPS I which functions as a virulence factor. May play a role in export of EPS I or its intermediates across the membranes. This chain is EPS I polysaccharide export inner membrane protein EpsE (epsE), found in Ralstonia solanacearum (Pseudomonas solanacearum).